We begin with the raw amino-acid sequence, 230 residues long: 5'-methylthioadenosine/S-adenosylhomocysteine nucleosidase (230 aa).

Residue glutamate 12 is the Proton acceptor of the active site. Substrate-binding positions include glycine 78, isoleucine 152, and 173 to 174 (ME). Aspartate 197 functions as the Proton donor in the catalytic mechanism.

The protein belongs to the PNP/UDP phosphorylase family. MtnN subfamily.

It catalyses the reaction S-adenosyl-L-homocysteine + H2O = S-(5-deoxy-D-ribos-5-yl)-L-homocysteine + adenine. It carries out the reaction S-methyl-5'-thioadenosine + H2O = 5-(methylsulfanyl)-D-ribose + adenine. The enzyme catalyses 5'-deoxyadenosine + H2O = 5-deoxy-D-ribose + adenine. It functions in the pathway amino-acid biosynthesis; L-methionine biosynthesis via salvage pathway; S-methyl-5-thio-alpha-D-ribose 1-phosphate from S-methyl-5'-thioadenosine (hydrolase route): step 1/2. Functionally, catalyzes the irreversible cleavage of the glycosidic bond in both 5'-methylthioadenosine (MTA) and S-adenosylhomocysteine (SAH/AdoHcy) to adenine and the corresponding thioribose, 5'-methylthioribose and S-ribosylhomocysteine, respectively. Also cleaves 5'-deoxyadenosine, a toxic by-product of radical S-adenosylmethionine (SAM) enzymes, into 5-deoxyribose and adenine. This is 5'-methylthioadenosine/S-adenosylhomocysteine nucleosidase from Actinobacillus succinogenes (strain ATCC 55618 / DSM 22257 / CCUG 43843 / 130Z).